The primary structure comprises 116 residues: Putative iron-sulfur cluster insertion protein ErpA (116 aa).

Positions 44, 108, and 110 each coordinate iron-sulfur cluster.

This sequence belongs to the HesB/IscA family. In terms of assembly, homodimer. Iron-sulfur cluster is required as a cofactor.

Its function is as follows. Required for insertion of 4Fe-4S clusters. This Aromatoleum aromaticum (strain DSM 19018 / LMG 30748 / EbN1) (Azoarcus sp. (strain EbN1)) protein is Putative iron-sulfur cluster insertion protein ErpA.